The following is a 158-amino-acid chain: Trafficking protein particle complex subunit 6B (158 aa).

It belongs to the TRAPP small subunits family. BET3 subfamily. Homodimer. Part of a TRAPP complex. Heterodimer with TRAPPC3. The heterodimer TRAPPC6B-TRAPPC3 interacts with TRAPPC1 likely providing a core for TRAPP complex formation.

The protein resides in the golgi apparatus. The protein localises to the cis-Golgi network. It is found in the endoplasmic reticulum. Component of a transport protein particle (TRAPP) complex that may function in specific stages of inter-organelle traffic. Specifically involved in the early development of neural circuitry, likely by controlling the frequency and amplitude of intracellular calcium transients implicated in the regulation of neuron differentiation and survival. The sequence is that of Trafficking protein particle complex subunit 6B from Bos taurus (Bovine).